The chain runs to 348 residues: Dihydroorotase (348 aa).

Zn(2+) is bound by residues His14 and His16. Residues 16 to 18 and Asn42 contribute to the substrate site; that span reads HLR. Positions 100, 137, and 175 each coordinate Zn(2+). Lys100 is modified (N6-carboxylysine). His137 lines the substrate pocket. Position 220 (Leu220) interacts with substrate. Asp248 is a binding site for Zn(2+). Residue Asp248 is part of the active site. Substrate contacts are provided by His252 and Ala264.

It belongs to the metallo-dependent hydrolases superfamily. DHOase family. Class II DHOase subfamily. In terms of assembly, homodimer. The cofactor is Zn(2+).

It carries out the reaction (S)-dihydroorotate + H2O = N-carbamoyl-L-aspartate + H(+). The protein operates within pyrimidine metabolism; UMP biosynthesis via de novo pathway; (S)-dihydroorotate from bicarbonate: step 3/3. Its function is as follows. Catalyzes the reversible cyclization of carbamoyl aspartate to dihydroorotate. The polypeptide is Dihydroorotase (Pseudomonas fluorescens (strain SBW25)).